The following is a 126-amino-acid chain: Small ribosomal subunit protein bS6 (126 aa).

Belongs to the bacterial ribosomal protein bS6 family.

Functionally, binds together with bS18 to 16S ribosomal RNA. This chain is Small ribosomal subunit protein bS6, found in Bordetella bronchiseptica (strain ATCC BAA-588 / NCTC 13252 / RB50) (Alcaligenes bronchisepticus).